Reading from the N-terminus, the 166-residue chain is NADPH-dependent 7-cyano-7-deazaguanine reductase (166 aa).

Cys-57 serves as the catalytic Thioimide intermediate. Catalysis depends on Asp-64, which acts as the Proton donor. Residues 79–81 (VES) and 98–99 (HE) each bind substrate.

This sequence belongs to the GTP cyclohydrolase I family. QueF type 1 subfamily.

The protein resides in the cytoplasm. It carries out the reaction 7-aminomethyl-7-carbaguanine + 2 NADP(+) = 7-cyano-7-deazaguanine + 2 NADPH + 3 H(+). Its pathway is tRNA modification; tRNA-queuosine biosynthesis. Functionally, catalyzes the NADPH-dependent reduction of 7-cyano-7-deazaguanine (preQ0) to 7-aminomethyl-7-deazaguanine (preQ1). This chain is NADPH-dependent 7-cyano-7-deazaguanine reductase, found in Staphylococcus aureus (strain MRSA252).